A 65-amino-acid chain; its full sequence is Prokaryotic ubiquitin-like protein Pup (65 aa).

A compositionally biased stretch (basic and acidic residues) spans 1 to 14 (MSGHEQQRPSRREE). The interval 1 to 35 (MSGHEQQRPSRREEDVEETPVVPAQAGAQAKESDA) is disordered. The segment at 21-59 (VVPAQAGAQAKESDADVDALLDEIDEVLESNSEEFVRGF) is ARC ATPase binding. Residues 26–49 (AGAQAKESDADVDALLDEIDEVLE) adopt a coiled-coil conformation. The residue at position 65 (Gln-65) is a Deamidated glutamine. Residue Gln-65 forms an Isoglutamyl lysine isopeptide (Gln-Lys) (interchain with K-? in acceptor proteins) linkage.

The protein belongs to the prokaryotic ubiquitin-like protein family. As to quaternary structure, strongly interacts with the proteasome-associated ATPase ARC through a hydrophobic interface; the interacting region of Pup lies in its C-terminal half. There is one Pup binding site per ARC hexamer ring. Is modified by deamidation of its C-terminal glutamine to glutamate by the deamidase Dop, a prerequisite to the subsequent pupylation process.

It functions in the pathway protein degradation; proteasomal Pup-dependent pathway. Functionally, protein modifier that is covalently attached to lysine residues of substrate proteins, thereby targeting them for proteasomal degradation. The tagging system is termed pupylation. The sequence is that of Prokaryotic ubiquitin-like protein Pup from Kineococcus radiotolerans (strain ATCC BAA-149 / DSM 14245 / SRS30216).